Here is a 437-residue protein sequence, read N- to C-terminus: Argininosuccinate lyase (437 aa).

Belongs to the lyase 1 family. Argininosuccinate lyase subfamily.

It is found in the cytoplasm. The enzyme catalyses 2-(N(omega)-L-arginino)succinate = fumarate + L-arginine. It participates in amino-acid biosynthesis; L-arginine biosynthesis; L-arginine from L-ornithine and carbamoyl phosphate: step 3/3. The sequence is that of Argininosuccinate lyase from Clostridium novyi (strain NT).